The sequence spans 334 residues: Nucleoid-associated protein PFL_1060 (334 aa).

This sequence belongs to the YejK family.

The protein resides in the cytoplasm. The protein localises to the nucleoid. The polypeptide is Nucleoid-associated protein PFL_1060 (Pseudomonas fluorescens (strain ATCC BAA-477 / NRRL B-23932 / Pf-5)).